A 268-amino-acid chain; its full sequence is Putative ABC transporter ATP-binding protein LMOf2365_1216 (268 aa).

One can recognise an ABC transporter domain in the interval 2–237 (LKTEHISFQY…KSNVEQAGLV (236 aa)). 35-42 (GANGSGKS) contributes to the ATP binding site.

This sequence belongs to the ABC transporter superfamily.

It localises to the cell membrane. Functionally, probably part of an ABC transporter complex. Responsible for energy coupling to the transport system. In Listeria monocytogenes serotype 4b (strain F2365), this protein is Putative ABC transporter ATP-binding protein LMOf2365_1216.